A 360-amino-acid polypeptide reads, in one-letter code: D-alanine--D-alanine ligase (360 aa).

The ATP-grasp domain maps to 146-352; sequence KLCVADAGIA…FPELAERLLQ (207 aa). ATP is bound at residue 179–234; that stretch reads EEKFIYPFFVKPANLGSSIGISKVHHREQLPAALKSACSLDSKIVVEKAITGREIE. D305, E319, and N321 together coordinate Mg(2+).

The protein belongs to the D-alanine--D-alanine ligase family. It depends on Mg(2+) as a cofactor. Mn(2+) serves as cofactor.

The protein resides in the cytoplasm. The catalysed reaction is 2 D-alanine + ATP = D-alanyl-D-alanine + ADP + phosphate + H(+). The protein operates within cell wall biogenesis; peptidoglycan biosynthesis. Cell wall formation. The polypeptide is D-alanine--D-alanine ligase (Pelodictyon phaeoclathratiforme (strain DSM 5477 / BU-1)).